The chain runs to 273 residues: Putative pyruvate, phosphate dikinase regulatory protein (273 aa).

153-160 (GISRTSKT) contacts ADP.

Belongs to the pyruvate, phosphate/water dikinase regulatory protein family. PDRP subfamily.

The catalysed reaction is N(tele)-phospho-L-histidyl/L-threonyl-[pyruvate, phosphate dikinase] + ADP = N(tele)-phospho-L-histidyl/O-phospho-L-threonyl-[pyruvate, phosphate dikinase] + AMP + H(+). It catalyses the reaction N(tele)-phospho-L-histidyl/O-phospho-L-threonyl-[pyruvate, phosphate dikinase] + phosphate + H(+) = N(tele)-phospho-L-histidyl/L-threonyl-[pyruvate, phosphate dikinase] + diphosphate. In terms of biological role, bifunctional serine/threonine kinase and phosphorylase involved in the regulation of the pyruvate, phosphate dikinase (PPDK) by catalyzing its phosphorylation/dephosphorylation. The sequence is that of Putative pyruvate, phosphate dikinase regulatory protein from Rhizobium etli (strain CIAT 652).